The primary structure comprises 389 residues: Formate-dependent phosphoribosylglycinamide formyltransferase (389 aa).

Residues 12–13 and Glu72 contribute to the N(1)-(5-phospho-beta-D-ribosyl)glycinamide site; that span reads EL. Residues Arg104, Lys145, 150–155, 185–188, and Glu193 each bind ATP; these read SSGKGQ and EAFV. Positions 109–300 constitute an ATP-grasp domain; it reads DLASKELGLR…EFELHARAVL (192 aa). Mg(2+)-binding residues include Glu258 and Glu270. Residues Asp277, Lys348, and 355–356 each bind N(1)-(5-phospho-beta-D-ribosyl)glycinamide; that span reads RR.

Belongs to the PurK/PurT family. In terms of assembly, homodimer.

The catalysed reaction is N(1)-(5-phospho-beta-D-ribosyl)glycinamide + formate + ATP = N(2)-formyl-N(1)-(5-phospho-beta-D-ribosyl)glycinamide + ADP + phosphate + H(+). It functions in the pathway purine metabolism; IMP biosynthesis via de novo pathway; N(2)-formyl-N(1)-(5-phospho-D-ribosyl)glycinamide from N(1)-(5-phospho-D-ribosyl)glycinamide (formate route): step 1/1. Its function is as follows. Involved in the de novo purine biosynthesis. Catalyzes the transfer of formate to 5-phospho-ribosyl-glycinamide (GAR), producing 5-phospho-ribosyl-N-formylglycinamide (FGAR). Formate is provided by PurU via hydrolysis of 10-formyl-tetrahydrofolate. This Chlorobium phaeobacteroides (strain DSM 266 / SMG 266 / 2430) protein is Formate-dependent phosphoribosylglycinamide formyltransferase.